Reading from the N-terminus, the 702-residue chain is ATP-dependent RNA helicase DDX4 (702 aa).

The interval 22 to 228 (FEKDKYSSGA…YIPPPPPEDE (207 aa)) is disordered. Residues 29-46 (SGANGDTFNRTSASSDIG) are compositionally biased toward polar residues. Gly residues-rich tracts occupy residues 58-68 (GGFGRGKGFGN) and 125-137 (RGSFRGCRGGFGL). 2 stretches are compositionally biased toward polar residues: residues 141-150 (NSESDQDQGT) and 195-215 (SGKNSWKSETEGGESSDSQGP). Phosphoserine is present on residues Ser-195 and Ser-199. Residues 201 to 220 (KSETEGGESSDSQGPKVTYI) are interaction with RANBP9. Residues 261–289 (LTFEEANLCQTLNNNIAKAGYTKLTPVQK) carry the Q motif motif. The region spanning 292 to 475 (IPIVLAGRDL…GDFLKSSYLF (184 aa)) is the Helicase ATP-binding domain. 305-312 (AQTGSGKT) is a binding site for ATP. A DEAD box motif is present at residues 419 to 422 (DEAD). The Helicase C-terminal domain occupies 503 to 648 (KLVEILRNIG…DVPAWLEEIA (146 aa)). Residues 681-693 (TLNTAGISSSQAP) show a composition bias toward polar residues. The tract at residues 681 to 702 (TLNTAGISSSQAPNPVDDESWD) is disordered. Ser-700 carries the post-translational modification Phosphoserine.

The protein belongs to the DEAD box helicase family. DDX4/VASA subfamily. Found in a mRNP complex, at least composed of TDRD1, TDRD6, TDRD7 and DDX4. Interacts with RANBP9. Interacts with RANBP10. Interacts with PIWIL2 and MAEL. Interacts with BMAL1 and CLOCK. Interacts with Tex19.1 and, probably, Tex19.2. Interacts with RBM46. Testis-specific.

The protein resides in the cytoplasm. It localises to the perinuclear region. The catalysed reaction is ATP + H2O = ADP + phosphate + H(+). Its function is as follows. ATP-dependent RNA helicase required during spermatogenesis to repress transposable elements and preventing their mobilization, which is essential for the germline integrity. Acts via the piRNA metabolic process, which mediates the repression of transposable elements during meiosis by forming complexes composed of piRNAs and Piwi proteins and governs the methylation and subsequent repression of transposons. Involved in the secondary piRNAs metabolic process, the production of piRNAs in fetal male germ cells through a ping-pong amplification cycle. Required for PIWIL2 slicing-triggered piRNA biogenesis: helicase activity enables utilization of one of the slice cleavage fragments generated by PIWIL2 and processing these pre-piRNAs into piRNAs. This Mus musculus (Mouse) protein is ATP-dependent RNA helicase DDX4.